The sequence spans 256 residues: 1-(5-phosphoribosyl)-5-[(5-phosphoribosylamino)methylideneamino] imidazole-4-carboxamide isomerase (256 aa).

Residue D8 is the Proton acceptor of the active site. D130 functions as the Proton donor in the catalytic mechanism.

This sequence belongs to the HisA/HisF family.

It localises to the cytoplasm. The enzyme catalyses 1-(5-phospho-beta-D-ribosyl)-5-[(5-phospho-beta-D-ribosylamino)methylideneamino]imidazole-4-carboxamide = 5-[(5-phospho-1-deoxy-D-ribulos-1-ylimino)methylamino]-1-(5-phospho-beta-D-ribosyl)imidazole-4-carboxamide. Its pathway is amino-acid biosynthesis; L-histidine biosynthesis; L-histidine from 5-phospho-alpha-D-ribose 1-diphosphate: step 4/9. The protein is 1-(5-phosphoribosyl)-5-[(5-phosphoribosylamino)methylideneamino] imidazole-4-carboxamide isomerase of Chlorobium phaeobacteroides (strain DSM 266 / SMG 266 / 2430).